A 1034-amino-acid polypeptide reads, in one-letter code: Glycine dehydrogenase (decarboxylating) B, mitochondrial (1034 aa).

The transit peptide at 1 to 63 directs the protein to the mitochondrion; sequence MERARRLAIL…LNGFGSQVRT (63 aa). K770 is subject to N6-(pyridoxal phosphate)lysine.

The protein belongs to the GcvP family. As to quaternary structure, homodimer. The glycine cleavage system is composed of four proteins: P, T, L and H. The cofactor is pyridoxal 5'-phosphate.

It localises to the mitochondrion. The enzyme catalyses N(6)-[(R)-lipoyl]-L-lysyl-[glycine-cleavage complex H protein] + glycine + H(+) = N(6)-[(R)-S(8)-aminomethyldihydrolipoyl]-L-lysyl-[glycine-cleavage complex H protein] + CO2. The glycine cleavage system catalyzes the degradation of glycine. The P protein binds the alpha-amino group of glycine through its pyridoxal phosphate cofactor; CO(2) is released and the remaining methylamine moiety is then transferred to the lipoamide cofactor of the H protein. The sequence is that of Glycine dehydrogenase (decarboxylating) B, mitochondrial (GDCSPB) from Flaveria pringlei.